The following is a 110-amino-acid chain: Class I hydrophobin Po.HYD (110 aa).

Residues 1–27 form the signal peptide; sequence MFSKATLFFTTVSRYRDTQAPIPTGQT. Cystine bridges form between Cys35/Cys91, Cys42/Cys85, Cys43/Cys75, and Cys92/Cys105.

Belongs to the fungal hydrophobin family. As to quaternary structure, self-assembles to form functional amyloid fibrils called rodlets. Self-assembly into fibrillar rodlets occurs spontaneously at hydrophobic:hydrophilic interfaces and the rodlets further associate laterally to form amphipathic monolayers.

It localises to the secreted. It is found in the cell wall. Aerial growth, conidiation, and dispersal of filamentous fungi in the environment rely upon a capability of their secreting small amphipathic proteins called hydrophobins (HPBs) with low sequence identity. Class I can self-assemble into an outermost layer of rodlet bundles on aerial cell surfaces, conferring cellular hydrophobicity that supports fungal growth, development and dispersal; whereas Class II form highly ordered films at water-air interfaces through intermolecular interactions but contribute nothing to the rodlet structure. The protein is Class I hydrophobin Po.HYD of Pleurotus ostreatus (Oyster mushroom).